The sequence spans 725 residues: Methionine--tRNA ligase (725 aa).

Positions 27–37 match the 'HIGH' region motif; that stretch reads PYANGQIHIGH. The Zn(2+) site is built by C158, C161, C171, and C174. A 'KMSKS' region motif is present at residues 348 to 352; the sequence is KMSKS. Residue K351 participates in ATP binding. The tRNA-binding domain maps to 619-725; the sequence is DFAKIDLRIA…SGAKPGMRVK (107 aa).

It belongs to the class-I aminoacyl-tRNA synthetase family. MetG type 1 subfamily. Homodimer. Requires Zn(2+) as cofactor.

It is found in the cytoplasm. It catalyses the reaction tRNA(Met) + L-methionine + ATP = L-methionyl-tRNA(Met) + AMP + diphosphate. Its function is as follows. Is required not only for elongation of protein synthesis but also for the initiation of all mRNA translation through initiator tRNA(fMet) aminoacylation. This Burkholderia pseudomallei (strain 1106a) protein is Methionine--tRNA ligase.